A 186-amino-acid chain; its full sequence is dITP/XTP pyrophosphatase (186 aa).

7-12 contacts substrate; the sequence is TSNPGK. The Mg(2+) site is built by Glu36 and Asp65. Residue Asp65 is the Proton acceptor of the active site. Substrate contacts are provided by residues Ser66, 140–143, Lys163, and 168–169; these read FGYD and HR.

It belongs to the HAM1 NTPase family. Homodimer. Mg(2+) is required as a cofactor. The cofactor is Mn(2+).

It carries out the reaction XTP + H2O = XMP + diphosphate + H(+). The enzyme catalyses dITP + H2O = dIMP + diphosphate + H(+). The catalysed reaction is ITP + H2O = IMP + diphosphate + H(+). In terms of biological role, pyrophosphatase that catalyzes the hydrolysis of nucleoside triphosphates to their monophosphate derivatives, with a high preference for the non-canonical purine nucleotides XTP (xanthosine triphosphate), dITP (deoxyinosine triphosphate) and ITP. Seems to function as a house-cleaning enzyme that removes non-canonical purine nucleotides from the nucleotide pool, thus preventing their incorporation into DNA/RNA and avoiding chromosomal lesions. The sequence is that of dITP/XTP pyrophosphatase from Pyrococcus horikoshii (strain ATCC 700860 / DSM 12428 / JCM 9974 / NBRC 100139 / OT-3).